Reading from the N-terminus, the 101-residue chain is Small ribosomal subunit protein uS14 (101 aa).

The protein belongs to the universal ribosomal protein uS14 family. As to quaternary structure, part of the 30S ribosomal subunit. Contacts proteins S3 and S10.

Binds 16S rRNA, required for the assembly of 30S particles and may also be responsible for determining the conformation of the 16S rRNA at the A site. The polypeptide is Small ribosomal subunit protein uS14 (Gluconobacter oxydans (strain 621H) (Gluconobacter suboxydans)).